The following is a 609-amino-acid chain: Granule-bound starch synthase 1, chloroplastic/amyloplastic (609 aa).

The transit peptide at 1–77 (MSALTTSQLA…SRRFPSVVVY (77 aa)) directs the protein to the chloroplast. Residues 29–67 (RHGFQGLKPRSPAGGDATSLSVTTSARATPKQQRSVQRG) are disordered. The segment covering 46–66 (TSLSVTTSARATPKQQRSVQR) has biased composition (polar residues). Lysine 97 provides a ligand contact to ADP-alpha-D-glucose. Positions 100, 408, 413, 462, and 493 each coordinate ADP. Cysteine 337 and cysteine 529 are joined by a disulfide.

It belongs to the glycosyltransferase 1 family. Bacterial/plant glycogen synthase subfamily.

It is found in the plastid. Its subcellular location is the chloroplast. It localises to the amyloplast. It catalyses the reaction an NDP-alpha-D-glucose + [(1-&gt;4)-alpha-D-glucosyl](n) = [(1-&gt;4)-alpha-D-glucosyl](n+1) + a ribonucleoside 5'-diphosphate + H(+). It participates in glycan biosynthesis; starch biosynthesis. Required for the synthesis of amylose in endosperm. This Oryza sativa subsp. indica (Rice) protein is Granule-bound starch synthase 1, chloroplastic/amyloplastic (WAXY).